Reading from the N-terminus, the 446-residue chain is Minor fimbrium tip subunit Mfa3 (446 aa).

The N-terminal stretch at 1–20 (MMQLKKRYFALILLLFLWSG) is a signal peptide. Cysteine 21 carries the N-palmitoyl cysteine lipid modification. Cysteine 21 is lipidated: S-diacylglycerol cysteine. Positions 21–43 (CDRGVDPQPDPLQPDVYLLVNAR) are excised as a propeptide.

It belongs to the bacteroidetes fimbrillin superfamily. FimB/Mfa2 family. In terms of assembly, component of the fimbrium tip. Minor fimbriae are composed of a structural subunit, most often Mfa1, and the accessory subunits Mfa3, Mfa4 and Mfa5. Fimbrium assembly occurs by linear, head-to-tail oligomerization of fimbrial subunits. This is mediated via insertion of a C-terminal beta-strand from one subunit into a groove in the N-terminal domain of the following subunit. Mfa3 is required for Mfa4 and Mfa5 insertion into the fimbrium.

It is found in the fimbrium. The protein localises to the cell outer membrane. Its function is as follows. Tip subunit of the minor fimbriae. These filamentous pili are attached to the cell surface; they mediate biofilm formation, adhesion onto host cells and onto other bacteria that are part of the oral microbiome. They play an important role in invasion of periodontal tissues and are recognized as major virulence factors. Fimbrium subunits from different strains have highly divergent sequences, and this correlates with pathogenicity. The polypeptide is Minor fimbrium tip subunit Mfa3 (mfa3) (Porphyromonas gingivalis (strain ATCC 33277 / DSM 20709 / CIP 103683 / JCM 12257 / NCTC 11834 / 2561)).